We begin with the raw amino-acid sequence, 185 residues long: Calcium-binding protein CML37 (185 aa).

The segment covering 1–12 has biased composition (polar residues); it reads MTLAKNQKSSLS. The segment at 1-45 is disordered; the sequence is MTLAKNQKSSLSRLYKKVSSKRSESSRNLEDESRTSSNSSGSSSL. Residues 21–34 show a composition bias toward basic and acidic residues; the sequence is KRSESSRNLEDESR. Low complexity predominate over residues 35 to 44; it reads TSSNSSGSSS. EF-hand domains follow at residues 45-80, 81-116, 119-154, and 155-185; these read LNVNELRTVFDYMDANSDGKISGEELQSCVSLLGGA, LSSREVEEVVKTSDVDGDGFIDFEEFLKLMEGEDGS, ERRKELKEAFGMYVMEGEEFITAASLRRTLSRLGES, and CTVDACKVMIRGFDQNDDGVLSFDEFVLMMR. Asp-58, Asn-60, Asp-62, Lys-64, Glu-69, Asp-94, Asp-96, Asp-98, and Glu-105 together coordinate Ca(2+). Ca(2+)-binding residues include Asp-168, Asn-170, Asp-172, and Glu-179.

As to quaternary structure, binds to ABCG36. Expressed in cotyledons, stipule, young leaves and at the hypocotyl-root junction. In mature root, expressed in the stele, cortex, emerging lateral root, root tip and root cap. In mature plant, expressed at the base of cauline and floral branches, and in rosette and cauline leaves. Expressed from stage 9 to 14 of flower development in anthers. At stage 15, expressed in carpel, sepals, petals and pollen until dehiscence. Expressed in developing seeds and young siliques.

Potential calcium sensor that binds calcium in vitro. This Arabidopsis thaliana (Mouse-ear cress) protein is Calcium-binding protein CML37.